The chain runs to 174 residues: Probable phenolic acid decarboxylase (174 aa).

This sequence belongs to the PadC family.

In terms of biological role, catalyzes the decarboxylation of phenolic acids. The chain is Probable phenolic acid decarboxylase (padC) from Vibrio cholerae serotype O1 (strain ATCC 39315 / El Tor Inaba N16961).